The sequence spans 363 residues: Protein-arginine kinase (363 aa).

Positions 24 to 255 constitute a Phosphagen kinase C-terminal domain; the sequence is IVLSSRIRLA…QQLIAQERAA (232 aa). ATP-binding positions include 27–31, His-92, Arg-126, 177–181, and 208–213; these read SSRIR, RASVM, and RGTYGE. The RDXXRA motif of the pArg binding pocket involved in allosteric regulation signature appears at 338–343; sequence RDVRRA.

The protein belongs to the ATP:guanido phosphotransferase family.

It carries out the reaction L-arginyl-[protein] + ATP = N(omega)-phospho-L-arginyl-[protein] + ADP + H(+). With respect to regulation, appears to be allosterically activated by the binding of pArg-containing polypeptides to the pArg-binding pocket localized in the C-terminal domain of McsB. Catalyzes the specific phosphorylation of arginine residues in a large number of proteins. Is part of the bacterial stress response system. Protein arginine phosphorylation has a physiologically important role and is involved in the regulation of many critical cellular processes, such as protein homeostasis, motility, competence, and stringent and stress responses, by regulating gene expression and protein activity. The protein is Protein-arginine kinase of Geobacillus thermodenitrificans (strain NG80-2).